The primary structure comprises 174 residues: Single-stranded DNA-binding protein 1 (174 aa).

The SSB domain occupies 6–111; it reads VNKVILVGNL…VVVNVGGTMQ (106 aa). Residues 55–61 mediate DNA binding; the sequence is WHRVVLF. The segment at 110-174 is disordered; it reads MQMLGGRQGG…PMDFDDDIPF (65 aa). Positions 115–133 are enriched in gly residues; the sequence is GRQGGGAPAGGGQQQGGWG. Positions 134–160 are enriched in low complexity; the sequence is QPQQPQGGNQFSGGAQSRPQQQAPAAP. Residues 169-174 carry the Important for interaction with partner proteins motif; that stretch reads DDDIPF.

Homotetramer. Binds PriA via its C-terminus.

Plays an important role in DNA replication, recombination and repair. Binds to ssDNA and to an array of partner proteins to recruit them to their sites of action during DNA metabolism. Stimulates the ATPase activity of PriA. One tetramer binds to 26 nucleotides (nt) of ssDNA, a 55 nt piece of ssDNA probably binds 2 tetramers. This is Single-stranded DNA-binding protein 1 from Klebsiella pneumoniae subsp. pneumoniae (strain ATCC 700721 / MGH 78578).